We begin with the raw amino-acid sequence, 387 residues long: WD repeat-containing protein 55 (387 aa).

The segment covering 1–10 (MATPTEHEDL) has biased composition (basic and acidic residues). The interval 1 to 24 (MATPTEHEDLSEQEVTEDEFKTPK) is disordered. WD repeat units follow at residues 33 to 72 (KLEA…GENK), 79 to 118 (HHLK…LETR), 122 to 160 (AHKV…SFMD), 163 to 202 (HHED…FELL), 205 to 244 (IQNG…ATSD), 247 to 286 (AVQA…VVGS), and 290 to 329 (HVGE…DEKV). A disordered region spans residues 356 to 387 (FFAGLLDTTEENGKEGENDEDDDDEDSDSGSD). A compositionally biased stretch (acidic residues) spans 372–387 (ENDEDDDDEDSDSGSD).

Belongs to the WD repeat WDR55 family.

The protein resides in the nucleus. Its subcellular location is the nucleolus. In terms of biological role, nucleolar protein that acts as a modulator of rRNA synthesis. Plays a central role during organogenesis. The chain is WD repeat-containing protein 55 (wdr55) from Danio rerio (Zebrafish).